A 285-amino-acid polypeptide reads, in one-letter code: Mediator of RNA polymerase II transcription subunit 4 (285 aa).

Residues 1-13 (MSTPGPVPSSTSV) show a composition bias toward low complexity. The disordered stretch occupies residues 1–25 (MSTPGPVPSSTSVATLPFSAQDKTQ). Residues 31-115 (ELQSVGIYQD…TREILETLNT (85 aa)) are a coiled coil. A disordered region spans residues 206-285 (DNVNNDNNTS…DLDLFNPDEF (80 aa)). Basic and acidic residues-rich tracts occupy residues 216–250 (KIDE…RRGS) and 257–267 (GKEDSETKSEE). A compositionally biased stretch (acidic residues) spans 268–285 (NPDLELDLDLDLFNPDEF).

This sequence belongs to the Mediator complex subunit 4 family. In terms of assembly, component of the Mediator complex.

It is found in the nucleus. Functionally, component of the Mediator complex, a coactivator involved in the regulated transcription of nearly all RNA polymerase II-dependent genes. Mediator functions as a bridge to convey information from gene-specific regulatory proteins to the basal RNA polymerase II transcription machinery. Mediator is recruited to promoters by direct interactions with regulatory proteins and serves as a scaffold for the assembly of a functional preinitiation complex with RNA polymerase II and the general transcription factors. The chain is Mediator of RNA polymerase II transcription subunit 4 (MED4) from Kluyveromyces lactis (strain ATCC 8585 / CBS 2359 / DSM 70799 / NBRC 1267 / NRRL Y-1140 / WM37) (Yeast).